The chain runs to 212 residues: Riboflavin kinase (212 aa).

The tract at residues 1–83 (MTELYCERKT…NLLRYFDIAS (83 aa)) is unknown. Positions 84–212 (IKLVGRVVTG…GDRVELEVYL (129 aa)) are riboflavin kinase. A CDP-binding site is contributed by 93–98 (GLGEGA). Residues Thr-122 and Asn-124 each contribute to the Mg(2+) site. Residues Thr-179 and Glu-187 each contribute to the FMN site. 192–195 (VRVR) lines the CDP pocket.

It belongs to the archaeal riboflavin kinase family. The cofactor is Mg(2+).

The enzyme catalyses riboflavin + CTP = CDP + FMN + H(+). It participates in cofactor biosynthesis; FMN biosynthesis; FMN from riboflavin (CTP route): step 1/1. Catalyzes the CTP-dependent phosphorylation of riboflavin (vitamin B2) to form flavin mononucleotide (FMN). The chain is Riboflavin kinase (ribK) from Pyrobaculum calidifontis (strain DSM 21063 / JCM 11548 / VA1).